A 362-amino-acid polypeptide reads, in one-letter code: Innexin-17 (362 aa).

A run of 4 helical transmembrane segments spans residues 27 to 47 (YFTV…QYVG), 101 to 121 (WVPF…VIWN), 189 to 209 (FLAT…MGLG), and 266 to 286 (LFIA…FDIF).

Belongs to the pannexin family.

Its subcellular location is the cell membrane. It localises to the cell junction. It is found in the gap junction. Its function is as follows. Structural component of the gap junctions. This Caenorhabditis elegans protein is Innexin-17.